Reading from the N-terminus, the 170-residue chain is Photosystem I assembly protein Ycf3 (170 aa).

TPR repeat units lie at residues 35 to 68, 72 to 105, and 120 to 153; these read AFTY…EIDP, SYIL…NPFL, and GEQA…TPGN.

It belongs to the Ycf3 family.

The protein resides in the plastid. Its subcellular location is the chloroplast thylakoid membrane. Essential for the assembly of the photosystem I (PSI) complex. May act as a chaperone-like factor to guide the assembly of the PSI subunits. The chain is Photosystem I assembly protein Ycf3 from Oryza sativa (Rice).